The primary structure comprises 1290 residues: DNA-directed RNA polymerase subunit beta' (1290 aa).

Zn(2+)-binding residues include cysteine 68, cysteine 70, cysteine 83, and cysteine 86. Mg(2+)-binding residues include aspartate 530, aspartate 532, and aspartate 534. Zn(2+) contacts are provided by cysteine 909, cysteine 985, cysteine 992, and cysteine 995.

It belongs to the RNA polymerase beta' chain family. The RNAP catalytic core consists of 2 alpha, 1 beta, 1 beta' and 1 omega subunit. When a sigma factor is associated with the core the holoenzyme is formed, which can initiate transcription. The cofactor is Mg(2+). Zn(2+) is required as a cofactor.

The catalysed reaction is RNA(n) + a ribonucleoside 5'-triphosphate = RNA(n+1) + diphosphate. DNA-dependent RNA polymerase catalyzes the transcription of DNA into RNA using the four ribonucleoside triphosphates as substrates. The polypeptide is DNA-directed RNA polymerase subunit beta' (Mycoplasma pneumoniae (strain ATCC 29342 / M129 / Subtype 1) (Mycoplasmoides pneumoniae)).